Consider the following 136-residue polypeptide: Putative pre-16S rRNA nuclease (136 aa).

The protein belongs to the YqgF nuclease family.

It is found in the cytoplasm. Functionally, could be a nuclease involved in processing of the 5'-end of pre-16S rRNA. This Francisella tularensis subsp. novicida (strain U112) protein is Putative pre-16S rRNA nuclease.